Here is a 194-residue protein sequence, read N- to C-terminus: MGQIEWAMWANEQALASGLILVAGGIVATAGRFTQWYFGTYAIAAGVLVCLLEYPRGSRAKGSTLERCGQRYLTAVLKLLGPLSRNYYFRAALHLALSVPAGFLLATILGTVCLVIASIIYLLAAVRGEQWTPIEPRPKERPQVGGTIKQPPSNPPPRPPVEARKKPGEEDATPAGGPPGGPRVNPIPVTDEVV.

Residues 2–7 (GQIEWA) are Cytoplasmic-facing. A helical membrane pass occupies residues 8–30 (MWANEQALASGLILVAGGIVATA). Residues 31-35 (GRFTQ) lie on the Extracellular side of the membrane. Residues 36–53 (WYFGTYAIAAGVLVCLLE) traverse the membrane as a helical segment. Residues 54–69 (YPRGSRAKGSTLERCG) are Cytoplasmic-facing. An intramembrane segment occupies 70–80 (QRYLTAVLKLL). Residues 81-86 (GPLSRN) lie on the Cytoplasmic side of the membrane. A helical membrane pass occupies residues 87–104 (YYFRAALHLALSVPAGFL). Residue Leu105 is a topological domain, extracellular. A helical membrane pass occupies residues 106-126 (ATILGTVCLVIASIIYLLAAV). Over 127 to 194 (RGEQWTPIEP…NPIPVTDEVV (68 aa)) the chain is Cytoplasmic. Residues 134-194 (IEPRPKERPQ…NPIPVTDEVV (61 aa)) are disordered. Thr147 is subject to Phosphothreonine. Residue Lys149 forms a Glycyl lysine isopeptide (Lys-Gly) (interchain with G-Cter in ubiquitin) linkage.

Belongs to the p22phox family. As to quaternary structure, component of the phagocyte NADPH oxidase core complex/cytochrome b558 complex, composed of CYBB (heavy chain (beta)) and CYBA (light chain (alpha)). Component of the phagocyte NADPH oxidase complex composed of an obligatory core heterodimer formed by the membrane proteins CYBA and CYBB and the cytosolic regulatory subunits NCF1/p47-phox, NCF2/p67-phox, NCF4/p40-phox and the small GTPase RAC1 or RAC2. Interacts with NCF1 (via SH3 domain). Interacts with SH3PXD2A. Interacts with DUOX1, DUOX2 and TPO. Interacts with NOX4; this interaction mediates superoxide generation. Interacts with calprotectin (S100A8/9). Interacts with GBP7. Interacts with NOXO1. Forms a heterodimer with NOX3 and is essential for activity and cell membrane localization of NOX3. Interacts with NOX1. Phosphorylation at Thr-147 enhances NADPH oxidase activity by promoting NCF1/p47-phox binding. Post-translationally, ubiquitinated at Lys-149 likely by RNF145.

Its subcellular location is the cell membrane. Its function is as follows. Subunit of NADPH oxidase complexes that is required for the NADPH oxidase activity that generates, in various cell types, superoxide from molecular oxygen utilizing NADPH as an electron donor. Subunit of the phagocyte NADPH oxidase complex that mediates the transfer of electrons from cytosolic NADPH to O2 to produce the superoxide anion (O2(-)). In the activated complex, electrons are first transferred from NADPH to flavin adenine dinucleotide (FAD) and subsequently transferred via two heme molecules to molecular oxygen, producing superoxide through an outer-sphere reaction. Activation of the NADPH oxidase complex is initiated by the assembly of cytosolic subunits of the NADPH oxidase complex with the core NADPH oxidase complex to form a complex at the plasma membrane or phagosomal membrane. This activation process is initiated by phosphorylation dependent binding of the cytosolic NCF1/p47-phox subunit to the C-terminus of CYBA/p22-phox. Aassociates with NOX3 to form a functional NADPH oxidase constitutively generating superoxide. This chain is Cytochrome b-245 light chain, found in Oryctolagus cuniculus (Rabbit).